Reading from the N-terminus, the 550-residue chain is Retron Ec78 probable ATPase (550 aa).

The short motif at 93–100 (GNNGKGKT) is the ATP-binding element.

Its function is as follows. Probable ATPase component of antiviral defense system retron Ec78, composed of a non-coding RNA (ncRNA), a reverse transcriptase (RT), this protein and a putative HNH endonuclease. Expression of retron Ec78 confers protection against bacteriophage T5. At multiplicity of infection (MOI) of 0.02 cultures slow growth when infected with T5 but do not collapse, at MOI 2 cultures enter growth stasis. The polypeptide is Retron Ec78 probable ATPase (Escherichia coli).